The chain runs to 282 residues: NADPH-dependent 7-cyano-7-deazaguanine reductase (282 aa).

88-90 (IES) is a substrate binding site. 90–91 (SK) is an NADPH binding site. The active-site Thioimide intermediate is C190. D197 acts as the Proton donor in catalysis. 229–230 (HE) serves as a coordination point for substrate. 258–259 (RG) contributes to the NADPH binding site.

This sequence belongs to the GTP cyclohydrolase I family. QueF type 2 subfamily. Homodimer.

It is found in the cytoplasm. It catalyses the reaction 7-aminomethyl-7-carbaguanine + 2 NADP(+) = 7-cyano-7-deazaguanine + 2 NADPH + 3 H(+). The protein operates within tRNA modification; tRNA-queuosine biosynthesis. Catalyzes the NADPH-dependent reduction of 7-cyano-7-deazaguanine (preQ0) to 7-aminomethyl-7-deazaguanine (preQ1). The protein is NADPH-dependent 7-cyano-7-deazaguanine reductase of Escherichia coli O81 (strain ED1a).